We begin with the raw amino-acid sequence, 175 residues long: Transcriptional regulator GadE (175 aa).

Residues 109–174 form the HTH luxR-type domain; that stretch reads HKNSQLCFSH…DIVTLGITSY (66 aa). A DNA-binding region (H-T-H motif) is located at residues 133–152; the sequence is ESNITSTLNISQQTLKIQKF.

In terms of biological role, regulates the expression of several genes involved in acid resistance. Required for the expression of gadA and gadBC, among others, regardless of media or growth conditions. Binds directly to the 20 bp GAD box found in the control regions of both loci. Could be involved in the regulation of the genes coding for the type III secretion system in enterohaemorragic strains. The sequence is that of Transcriptional regulator GadE (gadE) from Escherichia coli O157:H7.